Reading from the N-terminus, the 243-residue chain is tRNA pseudouridine synthase A (243 aa).

Aspartate 54 functions as the Nucleophile in the catalytic mechanism. Tyrosine 112 is a substrate binding site.

It belongs to the tRNA pseudouridine synthase TruA family. In terms of assembly, homodimer.

It carries out the reaction uridine(38/39/40) in tRNA = pseudouridine(38/39/40) in tRNA. Its function is as follows. Formation of pseudouridine at positions 38, 39 and 40 in the anticodon stem and loop of transfer RNAs. The protein is tRNA pseudouridine synthase A of Aster yellows witches'-broom phytoplasma (strain AYWB).